Here is a 934-residue protein sequence, read N- to C-terminus: Bifunctional uridylyltransferase/uridylyl-removing enzyme (934 aa).

Positions 1-379 (MSAHDLKLEE…TFSRRKRKLS (379 aa)) are uridylyltransferase. The segment at 380-736 (DDGAFISENH…AKPHAFEAVT (357 aa)) is uridylyl-removing. The 118-residue stretch at 496–613 (VDEHLLRCIA…IDFADTVQTM (118 aa)) folds into the HD domain. ACT domains are found at residues 737-818 (EITV…DMLA) and 848-931 (VIEV…RSPQ).

Belongs to the GlnD family. Mg(2+) serves as cofactor.

It catalyses the reaction [protein-PII]-L-tyrosine + UTP = [protein-PII]-uridylyl-L-tyrosine + diphosphate. It carries out the reaction [protein-PII]-uridylyl-L-tyrosine + H2O = [protein-PII]-L-tyrosine + UMP + H(+). Uridylyltransferase (UTase) activity is inhibited by glutamine, while glutamine activates uridylyl-removing (UR) activity. Functionally, modifies, by uridylylation and deuridylylation, the PII regulatory proteins (GlnB and homologs), in response to the nitrogen status of the cell that GlnD senses through the glutamine level. Under low glutamine levels, catalyzes the conversion of the PII proteins and UTP to PII-UMP and PPi, while under higher glutamine levels, GlnD hydrolyzes PII-UMP to PII and UMP (deuridylylation). Thus, controls uridylylation state and activity of the PII proteins, and plays an important role in the regulation of nitrogen assimilation and metabolism. The protein is Bifunctional uridylyltransferase/uridylyl-removing enzyme of Brucella abortus (strain S19).